A 170-amino-acid chain; its full sequence is Phosphopantetheine adenylyltransferase (170 aa).

Thr10 contributes to the substrate binding site. Residues 10–11 (TF) and His18 each bind ATP. Substrate contacts are provided by Lys42, Val79, and Arg93. ATP contacts are provided by residues 94-96 (GLR), Glu104, and 129-135 (TQFISST).

It belongs to the bacterial CoaD family. Homohexamer. Mg(2+) serves as cofactor.

Its subcellular location is the cytoplasm. It carries out the reaction (R)-4'-phosphopantetheine + ATP + H(+) = 3'-dephospho-CoA + diphosphate. Its pathway is cofactor biosynthesis; coenzyme A biosynthesis; CoA from (R)-pantothenate: step 4/5. Reversibly transfers an adenylyl group from ATP to 4'-phosphopantetheine, yielding dephospho-CoA (dPCoA) and pyrophosphate. The sequence is that of Phosphopantetheine adenylyltransferase from Parvibaculum lavamentivorans (strain DS-1 / DSM 13023 / NCIMB 13966).